The following is a 633-amino-acid chain: Putative serine/threonine-protein kinase L232 (633 aa).

The 305-residue stretch at 10–314 (YTIVDKLSEG…QSRKLFYEIL (305 aa)) folds into the Protein kinase domain. Residues 16–24 (LSEGTYGIV) and K39 each bind ATP. The Proton acceptor role is filled by D133.

It belongs to the protein kinase superfamily. Ser/Thr protein kinase family.

It catalyses the reaction L-seryl-[protein] + ATP = O-phospho-L-seryl-[protein] + ADP + H(+). It carries out the reaction L-threonyl-[protein] + ATP = O-phospho-L-threonyl-[protein] + ADP + H(+). The protein is Putative serine/threonine-protein kinase L232 of Acanthamoeba polyphaga mimivirus (APMV).